We begin with the raw amino-acid sequence, 483 residues long: uncharacterized protein (483 aa).

Residues R11 to E71 enclose the TRAM domain. Residues C84, C90, C93, and C187 each contribute to the [4Fe-4S] cluster site. Residues Q312, Y341, E362, and D412 each coordinate S-adenosyl-L-methionine. The active-site Nucleophile is C439.

It belongs to the class I-like SAM-binding methyltransferase superfamily. RNA M5U methyltransferase family.

This is an uncharacterized protein from Chlorobaculum tepidum (strain ATCC 49652 / DSM 12025 / NBRC 103806 / TLS) (Chlorobium tepidum).